A 214-amino-acid polypeptide reads, in one-letter code: Adenylate kinase (214 aa).

10 to 15 (GAGKGT) is a binding site for ATP. Residues 30-59 (STGDMLRAAIKAGTELGKQAKAVIDAGQLV) are NMP. AMP-binding positions include Thr31, Arg36, 57–59 (QLV), 85–88 (GFPR), and Gln92. Residues 122–159 (GRRAHLPSGRTYHVVYNPPKVEGKDDVTGEDLVIREDD) are LID. Residues Arg123 and 132 to 133 (TY) contribute to the ATP site. Arg156 and Arg167 together coordinate AMP. Position 200 (Lys200) interacts with ATP.

The protein belongs to the adenylate kinase family. In terms of assembly, monomer.

The protein resides in the cytoplasm. It catalyses the reaction AMP + ATP = 2 ADP. It functions in the pathway purine metabolism; AMP biosynthesis via salvage pathway; AMP from ADP: step 1/1. Functionally, catalyzes the reversible transfer of the terminal phosphate group between ATP and AMP. Plays an important role in cellular energy homeostasis and in adenine nucleotide metabolism. In Vibrio cholerae serotype O1 (strain ATCC 39541 / Classical Ogawa 395 / O395), this protein is Adenylate kinase.